The sequence spans 123 residues: Highly acidic elicitin 20 (123 aa).

The N-terminal stretch at 1 to 20 (MQFTALFAATAVALVGSVSA) is a signal peptide. 3 cysteine pairs are disulfide-bonded: Cys23/Cys91, Cys47/Cys76, and Cys71/Cys115.

This sequence belongs to the elicitin family.

The protein resides in the secreted. Induces local and distal defense responses (incompatible hypersensitive reaction) in plants from the solanaceae and cruciferae families. Elicits leaf necrosis and causes the accumulation of pathogenesis-related proteins. Might interact with the lipidic molecules of the plasma membrane. The protein is Highly acidic elicitin 20 (B20) of Phytophthora cryptogea.